A 351-amino-acid polypeptide reads, in one-letter code: Methylthioribose-1-phosphate isomerase (351 aa).

Substrate-binding positions include 51–53 (RGA), arginine 94, and glutamine 199. Residue aspartate 240 is the Proton donor of the active site. 250–251 (NK) lines the substrate pocket.

Belongs to the EIF-2B alpha/beta/delta subunits family. MtnA subfamily. As to quaternary structure, homodimer.

It carries out the reaction 5-(methylsulfanyl)-alpha-D-ribose 1-phosphate = 5-(methylsulfanyl)-D-ribulose 1-phosphate. It functions in the pathway amino-acid biosynthesis; L-methionine biosynthesis via salvage pathway; L-methionine from S-methyl-5-thio-alpha-D-ribose 1-phosphate: step 1/6. In terms of biological role, catalyzes the interconversion of methylthioribose-1-phosphate (MTR-1-P) into methylthioribulose-1-phosphate (MTRu-1-P). This is Methylthioribose-1-phosphate isomerase from Bacillus thuringiensis subsp. konkukian (strain 97-27).